Consider the following 227-residue polypeptide: GTP:AMP phosphotransferase AK3, mitochondrial (227 aa).

GTP-binding residues include glycine 17, glycine 19, lysine 20, glycine 21, and threonine 22. Lysine 20 is modified (N6-succinyllysine). An N6-acetyllysine modification is found at lysine 34. Position 37 is a phosphoserine (serine 37). The interval 37–66 is NMP; that stretch reads SSGDLLRDNMLRGTEIGVLAKAFIDQGKLI. AMP-binding residues include serine 38 and arginine 43. At lysine 57 the chain carries N6-succinyllysine. Residue lysine 64 participates in AMP binding. N6-acetyllysine; alternate occurs at positions 64 and 80. Residues lysine 64 and lysine 80 each carry the N6-succinyllysine; alternate modification. AMP-binding residues include glycine 91, arginine 94, and glutamine 98. The segment at 127-164 is LID; sequence ARWIHPASGRVYNIEFNPPKTVGIDDLTGEPLIQREDD. Positions 128, 138, 139, 161, and 172 each coordinate GTP. Lysine 174 and lysine 189 each carry N6-acetyllysine; alternate. N6-succinyllysine; alternate occurs at positions 174 and 189. A GTP-binding site is contributed by threonine 201. An N6-acetyllysine modification is found at lysine 203.

Belongs to the adenylate kinase family. AK3 subfamily. As to quaternary structure, monomer.

The protein resides in the mitochondrion matrix. It carries out the reaction a ribonucleoside 5'-triphosphate + AMP = a ribonucleoside 5'-diphosphate + ADP. The enzyme catalyses GTP + AMP = GDP + ADP. It catalyses the reaction ITP + AMP = IDP + ADP. Mitochondrial adenylate kinase with a specific GTP:AMP phosphotransferase activity. Could also use ITP as phosphate donor. Its physiological function is to recycle GTP into GDP which is necessary for the TCA cycle in the mitochondrial matrix. The chain is GTP:AMP phosphotransferase AK3, mitochondrial from Pongo abelii (Sumatran orangutan).